A 234-amino-acid polypeptide reads, in one-letter code: DNA repair protein RecO (234 aa).

The protein belongs to the RecO family.

Its function is as follows. Involved in DNA repair and RecF pathway recombination. The sequence is that of DNA repair protein RecO from Coxiella burnetii (strain RSA 331 / Henzerling II).